Reading from the N-terminus, the 622-residue chain is 1-deoxy-D-xylulose-5-phosphate synthase (622 aa).

Thiamine diphosphate-binding positions include His-80 and Gly-121–Ser-123. Asp-152 is a Mg(2+) binding site. Thiamine diphosphate-binding positions include Gly-153 to Ala-154, Asn-181, Tyr-288, and Glu-370. Asn-181 lines the Mg(2+) pocket.

The protein belongs to the transketolase family. DXPS subfamily. As to quaternary structure, homodimer. Requires Mg(2+) as cofactor. It depends on thiamine diphosphate as a cofactor.

It carries out the reaction D-glyceraldehyde 3-phosphate + pyruvate + H(+) = 1-deoxy-D-xylulose 5-phosphate + CO2. It participates in metabolic intermediate biosynthesis; 1-deoxy-D-xylulose 5-phosphate biosynthesis; 1-deoxy-D-xylulose 5-phosphate from D-glyceraldehyde 3-phosphate and pyruvate: step 1/1. Functionally, catalyzes the acyloin condensation reaction between C atoms 2 and 3 of pyruvate and glyceraldehyde 3-phosphate to yield 1-deoxy-D-xylulose-5-phosphate (DXP). This Shewanella denitrificans (strain OS217 / ATCC BAA-1090 / DSM 15013) protein is 1-deoxy-D-xylulose-5-phosphate synthase.